Consider the following 125-residue polypeptide: UPF0231 protein HD_1708 (125 aa).

This sequence belongs to the UPF0231 family.

The protein is UPF0231 protein HD_1708 of Haemophilus ducreyi (strain 35000HP / ATCC 700724).